A 341-amino-acid chain; its full sequence is Glycerol-3-phosphate dehydrogenase [NAD(P)+] 1 (341 aa).

NADPH-binding residues include S17, W18, R37, and K112. 2 residues coordinate sn-glycerol 3-phosphate: K112 and G140. Position 144 (A144) interacts with NADPH. Sn-glycerol 3-phosphate is bound by residues K195, D248, S258, R259, and N260. K195 (proton acceptor) is an active-site residue. An NADPH-binding site is contributed by R259. NADPH contacts are provided by V283 and E285.

Belongs to the NAD-dependent glycerol-3-phosphate dehydrogenase family.

Its subcellular location is the cytoplasm. The catalysed reaction is sn-glycerol 3-phosphate + NAD(+) = dihydroxyacetone phosphate + NADH + H(+). The enzyme catalyses sn-glycerol 3-phosphate + NADP(+) = dihydroxyacetone phosphate + NADPH + H(+). Its pathway is membrane lipid metabolism; glycerophospholipid metabolism. Its function is as follows. Catalyzes the reduction of the glycolytic intermediate dihydroxyacetone phosphate (DHAP) to sn-glycerol 3-phosphate (G3P), the key precursor for phospholipid synthesis. This Mycobacterium bovis (strain ATCC BAA-935 / AF2122/97) protein is Glycerol-3-phosphate dehydrogenase [NAD(P)+] 1.